The sequence spans 147 residues: D-aminoacyl-tRNA deacylase (147 aa).

The Gly-cisPro motif, important for rejection of L-amino acids signature appears at 137 to 138 (GP).

Belongs to the DTD family. As to quaternary structure, homodimer.

Its subcellular location is the cytoplasm. The catalysed reaction is glycyl-tRNA(Ala) + H2O = tRNA(Ala) + glycine + H(+). It catalyses the reaction a D-aminoacyl-tRNA + H2O = a tRNA + a D-alpha-amino acid + H(+). Its function is as follows. An aminoacyl-tRNA editing enzyme that deacylates mischarged D-aminoacyl-tRNAs. Also deacylates mischarged glycyl-tRNA(Ala), protecting cells against glycine mischarging by AlaRS. Acts via tRNA-based rather than protein-based catalysis; rejects L-amino acids rather than detecting D-amino acids in the active site. By recycling D-aminoacyl-tRNA to D-amino acids and free tRNA molecules, this enzyme counteracts the toxicity associated with the formation of D-aminoacyl-tRNA entities in vivo and helps enforce protein L-homochirality. Upon expression in B.subtilis strain 168 confers resistance to D-Tyr and D-Asp, suggesting it acts on both of these amino acids. The protein is D-aminoacyl-tRNA deacylase of Bacillus amyloliquefaciens (Bacillus velezensis).